The primary structure comprises 570 residues: Proline--tRNA ligase (570 aa).

The protein belongs to the class-II aminoacyl-tRNA synthetase family. ProS type 1 subfamily. In terms of assembly, homodimer.

Its subcellular location is the cytoplasm. The enzyme catalyses tRNA(Pro) + L-proline + ATP = L-prolyl-tRNA(Pro) + AMP + diphosphate. Functionally, catalyzes the attachment of proline to tRNA(Pro) in a two-step reaction: proline is first activated by ATP to form Pro-AMP and then transferred to the acceptor end of tRNA(Pro). As ProRS can inadvertently accommodate and process non-cognate amino acids such as alanine and cysteine, to avoid such errors it has two additional distinct editing activities against alanine. One activity is designated as 'pretransfer' editing and involves the tRNA(Pro)-independent hydrolysis of activated Ala-AMP. The other activity is designated 'posttransfer' editing and involves deacylation of mischarged Ala-tRNA(Pro). The misacylated Cys-tRNA(Pro) is not edited by ProRS. In Clostridium perfringens (strain SM101 / Type A), this protein is Proline--tRNA ligase.